The sequence spans 430 residues: Adenylosuccinate synthetase (430 aa).

GTP-binding positions include 12–18 (GDEGKGK) and 40–42 (GHT). Residue Asp-13 is the Proton acceptor of the active site. Mg(2+) contacts are provided by Asp-13 and Gly-40. Residues 13 to 16 (DEGK), 38 to 41 (NAGH), Thr-128, Arg-142, Gln-223, Thr-238, and Arg-302 contribute to the IMP site. His-41 (proton donor) is an active-site residue. 298–304 (TTTGRPR) serves as a coordination point for substrate. GTP is bound by residues Arg-304, 330–332 (SID), and 412–414 (SVG).

Belongs to the adenylosuccinate synthetase family. Homodimer. The cofactor is Mg(2+).

The protein resides in the cytoplasm. It carries out the reaction IMP + L-aspartate + GTP = N(6)-(1,2-dicarboxyethyl)-AMP + GDP + phosphate + 2 H(+). It participates in purine metabolism; AMP biosynthesis via de novo pathway; AMP from IMP: step 1/2. Its function is as follows. Plays an important role in the de novo pathway of purine nucleotide biosynthesis. Catalyzes the first committed step in the biosynthesis of AMP from IMP. The chain is Adenylosuccinate synthetase from Streptococcus pyogenes serotype M6 (strain ATCC BAA-946 / MGAS10394).